A 268-amino-acid chain; its full sequence is Undecaprenyl-diphosphatase (268 aa).

The next 8 helical transmembrane spans lie at 1–21 (MSLI…FLPI), 39–59 (QGPL…LVYF), 85–105 (ALLV…LVAF), 110–130 (ALRS…PLWL), 144–164 (MSFK…IPGA), 187–207 (FSML…LIEL), 221–241 (DGLI…AVLM), and 247–267 (IGFL…LVFF).

The protein belongs to the UppP family.

The protein localises to the cell inner membrane. It catalyses the reaction di-trans,octa-cis-undecaprenyl diphosphate + H2O = di-trans,octa-cis-undecaprenyl phosphate + phosphate + H(+). Catalyzes the dephosphorylation of undecaprenyl diphosphate (UPP). Confers resistance to bacitracin. In Maricaulis maris (strain MCS10) (Caulobacter maris), this protein is Undecaprenyl-diphosphatase.